Consider the following 146-residue polypeptide: Hemoglobin A/D subunit beta (146 aa).

Residues 2–146 (HWTSEEKQYI…VAHALALGYH (145 aa)) enclose the Globin domain. Residues His63 and His92 each coordinate heme b.

The protein belongs to the globin family. Hemoglobins A and D are heterotetramers of alpha-1, alpha-2 and two identical beta chains. In terms of tissue distribution, red blood cells.

Functionally, involved in oxygen transport from the lung to the various peripheral tissues. The protein is Hemoglobin A/D subunit beta of Aldabrachelys gigantea (Aldabra giant tortoise).